Here is a 399-residue protein sequence, read N- to C-terminus: Stomatin-like protein 1 (399 aa).

Residues 6–10 carry the Tyrosine-type lysosomal sorting signal motif; it reads GYRAL. Ser-28 bears the Phosphoserine mark. Residues 58 to 78 form a helical; Signal-anchor for type III membrane protein membrane-spanning segment; it reads LVSVLGFLLLLLTFPISGWFA. The Cytoplasmic segment spans residues 79–399; sequence LKIVPTYERM…KLEAVLKALK (321 aa). Residues 288–399 form the SCP2 domain; it reads KQPVAEGLLT…KLEAVLKALK (112 aa).

The protein belongs to the band 7/mec-2 family. As to quaternary structure, interacts with STOM; may redistribute STOM from the plasma membrane to late endosomes. As to expression, expressed in dorsal root ganglion neurons.

The protein localises to the membrane. The protein resides in the cytoplasmic vesicle. Its subcellular location is the cell membrane. It is found in the late endosome membrane. It localises to the membrane raft. In terms of biological role, may play a role in cholesterol transfer to late endosomes. May play a role in modulating membrane acid-sensing ion channels. Can specifically inhibit proton-gated current of ASIC1 isoform 1. Can increase inactivation speed of ASIC3. May be involved in regulation of proton sensing in dorsal root ganglions. This Mus musculus (Mouse) protein is Stomatin-like protein 1 (Stoml1).